Consider the following 198-residue polypeptide: Ribonuclease HII (198 aa).

The region spanning 5 to 195 is the RNase H type-2 domain; it reads LRVAGVDEAG…VKAWLASHQG (191 aa). A divalent metal cation is bound by residues Asp11, Glu12, and Asp103.

This sequence belongs to the RNase HII family. Requires Mn(2+) as cofactor. The cofactor is Mg(2+).

Its subcellular location is the cytoplasm. It carries out the reaction Endonucleolytic cleavage to 5'-phosphomonoester.. Its function is as follows. Endonuclease that specifically degrades the RNA of RNA-DNA hybrids. This Chromobacterium violaceum (strain ATCC 12472 / DSM 30191 / JCM 1249 / CCUG 213 / NBRC 12614 / NCIMB 9131 / NCTC 9757 / MK) protein is Ribonuclease HII.